The sequence spans 531 residues: Chaperonin GroEL 2 (531 aa).

ATP-binding positions include 30 to 33, 87 to 91, G414, and D494; these read TLGP and DGTTT.

This sequence belongs to the chaperonin (HSP60) family. As to quaternary structure, forms a cylinder of 14 subunits composed of two heptameric rings stacked back-to-back. Interacts with the co-chaperonin GroES.

The protein resides in the cytoplasm. The catalysed reaction is ATP + H2O + a folded polypeptide = ADP + phosphate + an unfolded polypeptide.. Its function is as follows. Together with its co-chaperonin GroES, plays an essential role in assisting protein folding. The GroEL-GroES system forms a nano-cage that allows encapsulation of the non-native substrate proteins and provides a physical environment optimized to promote and accelerate protein folding. The sequence is that of Chaperonin GroEL 2 from Cutibacterium acnes (strain DSM 16379 / KPA171202) (Propionibacterium acnes).